Here is a 362-residue protein sequence, read N- to C-terminus: DLA class I histocompatibility antigen, A9/A9 alpha chain (362 aa).

Positions 1–24 are cleaved as a signal peptide; sequence MEVVMPRALLVLLSAALALTPTRA. Positions 25–114 are alpha-1; sequence GSHSLRYFYT…LRGYYNQSEA (90 aa). Residues 25–306 are Extracellular-facing; sequence GSHSLRYFYT…RRWEPSPLST (282 aa). Asparagine 110 carries an N-linked (GlcNAc...) asparagine glycan. The tract at residues 115-207 is alpha-2; the sequence is GSHTRQTMYG…EMGKETLLRA (93 aa). 2 disulfides stabilise this stretch: cysteine 125-cysteine 189 and cysteine 228-cysteine 284. The alpha-3 stretch occupies residues 208 to 299; that stretch reads DPPSTRVTHH…GLPEPITRRW (92 aa). The Ig-like C1-type domain maps to 210–296; sequence PSTRVTHHPV…QHEGLPEPIT (87 aa). Residues 300–306 form a connecting peptide region; the sequence is EPSPLST. The helical transmembrane segment at 307-329 threads the bilayer; it reads IVIVSIAALVLLVVAGVIGAVIW. Topologically, residues 330 to 362 are cytoplasmic; sequence RKQRSGGKGPGYSHAARDDSAQGSDVSLTAPRV. The tract at residues 333–362 is disordered; that stretch reads RSGGKGPGYSHAARDDSAQGSDVSLTAPRV.

Belongs to the MHC class I family. In terms of assembly, heterodimer of an alpha chain and a beta chain (beta-2-microglobulin).

It is found in the membrane. In terms of biological role, involved in the presentation of foreign antigens to the immune system. This is DLA class I histocompatibility antigen, A9/A9 alpha chain from Canis lupus familiaris (Dog).